A 371-amino-acid polypeptide reads, in one-letter code: MLSEDEKEKTPPSVMTSIPDDVIMECIAPRVPRYNHSMLSLVSKQFRSLVASPRLYKTRSLLGCTEDCVYVLIEDCILEVARWYSLNRRTKRNMPGTVENRLVLISSLPPMPTAASYVVVGSNIFVMGGRYDWNVEEWEAQPPSSIALCIDCRTHTTRLVADMPVGLMTNVSKVIDEKIYIVGRVWASATIVEFDLRTEKWADGTKPGWEADDRWLTSLSTTAGRGPSSFENNCDHKLMEDILMDKEEIKHYHLFDNECVMGNILYVYDRHKYILRTYDPKQRTWGVVKGLEKLPLGGDESYIVSRGKMLILFLIVVLEYDDDASFQKRELWCAEITVERREEGEIWGKVECCDLLLEGGLIIGSCLVVTL.

One can recognise an F-box domain in the interval 13–61 (SVMTSIPDDVIMECIAPRVPRYNHSMLSLVSKQFRSLVASPRLYKTRSL). Kelch repeat units follow at residues 123–165 (NIFV…DMPV), 178–229 (KIYI…GPSS), and 257–305 (NECV…YIVS).

The sequence is that of Putative F-box/kelch-repeat protein At3g10510 from Arabidopsis thaliana (Mouse-ear cress).